Reading from the N-terminus, the 152-residue chain is Large ribosomal subunit protein uL13 (152 aa).

The protein belongs to the universal ribosomal protein uL13 family. As to quaternary structure, part of the 50S ribosomal subunit.

Functionally, this protein is one of the early assembly proteins of the 50S ribosomal subunit, although it is not seen to bind rRNA by itself. It is important during the early stages of 50S assembly. The chain is Large ribosomal subunit protein uL13 from Borreliella afzelii (strain PKo) (Borrelia afzelii).